The primary structure comprises 343 residues: MGTDGDRAKAVDLAISQIERQFGKGSIMRLGAKERIEDIAVIPTGALSLDIALGIGGVPRGRIIEIFGPESGGKTTLALHIIAEAQKRNGLAAFIDAEHALDVSYARKIGVNTDDLLISQPDTGEQALEIAETLVRSGALDILVVDSVAALVPKAEIEGEMGDAQMGLQARLMSQALRKLTGSISKSNTTVIFINQLRMKIGVFFGNPETTTGGNALKFYASMRLDIRKSGSIKSGQDVIGMRTKVKVVKNKVAPPFRETEFDILFGEGISKAGDILDLAAESGIVEKSGAWYSYGGERIGQGRDNTRNFLKEHPDILVRIEEQVRSEHGLKPRLQEQEEPAK.

ATP is bound at residue 68–75; that stretch reads GPESGGKT.

The protein belongs to the RecA family.

It is found in the cytoplasm. Functionally, can catalyze the hydrolysis of ATP in the presence of single-stranded DNA, the ATP-dependent uptake of single-stranded DNA by duplex DNA, and the ATP-dependent hybridization of homologous single-stranded DNAs. It interacts with LexA causing its activation and leading to its autocatalytic cleavage. This is Protein RecA from Syntrophus aciditrophicus (strain SB).